A 326-amino-acid chain; its full sequence is Protein-arginine N-acetylglucosaminyltransferase NleB2 (326 aa).

UDP-N-acetyl-alpha-D-glucosamine is bound by residues Gln-45 to Phe-47, Tyr-69, and Tyr-216 to Met-219. The DXD motif motif lies at Asp-218–Asp-220. Asp-220 is a binding site for Mn(2+). Catalysis depends on Glu-250, which acts as the Proton acceptor. Asn-317 and Ser-319 together coordinate Mn(2+). UDP-N-acetyl-alpha-D-glucosamine is bound by residues Ser-319 and Ser-324–Trp-326.

Belongs to the glycosyltransferase NleB family. Mn(2+) serves as cofactor.

The protein resides in the secreted. It localises to the host cell. The catalysed reaction is L-arginyl-[protein] + UDP-N-acetyl-alpha-D-glucosamine = N(omega)-(N-acetyl-beta-D-glucosaminyl)-L-arginyl-[protein] + UDP + H(+). In terms of biological role, protein-arginine N-acetylglucosaminyltransferase effector that catalyzes the transfer of a single N-acetylglucosamine (GlcNAc) to a conserved arginine residue of host target proteins. In contrast to NleB1, not able to disrupt TNF signaling in infected cells. Shows a lower enzymatic activity than NleB1. The chain is Protein-arginine N-acetylglucosaminyltransferase NleB2 from Escherichia coli O145:H28 (strain RM12581).